Reading from the N-terminus, the 219-residue chain is Zinc finger C2HC domain-containing protein 1B (219 aa).

2 C2HC/C3H-type zinc fingers span residues 14 to 43 (ELFP…LFNK) and 117 to 146 (DYIQ…QESR). Positions 18, 21, 33, 37, 121, 124, 136, and 140 each coordinate Zn(2+). The segment at 190–219 (EASAAPTRPAVDPASGAKLRQGFAKSSKKD) is disordered.

The protein belongs to the ZC2HC1 family. Zn(2+) is required as a cofactor.

This chain is Zinc finger C2HC domain-containing protein 1B (ZC2HC1B), found in Bos taurus (Bovine).